The following is a 217-amino-acid chain: MOB kinase activator 3A (217 aa).

4 residues coordinate Zn(2+): Cys-83, Cys-88, His-165, and His-170.

Belongs to the MOB1/phocein family.

Its function is as follows. May regulate the activity of kinases. This chain is MOB kinase activator 3A (Mob3a), found in Mus musculus (Mouse).